Consider the following 310-residue polypeptide: tRNA-cytidine(32) 2-sulfurtransferase (310 aa).

The PP-loop motif motif lies at 45 to 50; that stretch reads SGGKDS. Residues Cys-120, Cys-123, and Cys-211 each coordinate [4Fe-4S] cluster.

It belongs to the TtcA family. Homodimer. It depends on Mg(2+) as a cofactor. The cofactor is [4Fe-4S] cluster.

It localises to the cytoplasm. It carries out the reaction cytidine(32) in tRNA + S-sulfanyl-L-cysteinyl-[cysteine desulfurase] + AH2 + ATP = 2-thiocytidine(32) in tRNA + L-cysteinyl-[cysteine desulfurase] + A + AMP + diphosphate + H(+). It functions in the pathway tRNA modification. In terms of biological role, catalyzes the ATP-dependent 2-thiolation of cytidine in position 32 of tRNA, to form 2-thiocytidine (s(2)C32). The sulfur atoms are provided by the cysteine/cysteine desulfurase (IscS) system. This chain is tRNA-cytidine(32) 2-sulfurtransferase, found in Shewanella putrefaciens (strain CN-32 / ATCC BAA-453).